A 380-amino-acid polypeptide reads, in one-letter code: Glycogenin-2 (380 aa).

Leu-10, Tyr-16, and Arg-95 together coordinate UDP. UDP-alpha-D-glucose contacts are provided by Leu-10, Tyr-16, Arg-95, Lys-104, Asp-120, Ala-121, Asp-122, Asn-158, Thr-159, Asp-185, Asp-188, and Gln-189. UDP-binding residues include Asp-120, Ala-121, and Asp-122. Position 120 (Asp-120) interacts with Mn(2+). Residue Asp-122 coordinates Mn(2+). O-linked (Glc...) tyrosine glycosylation is found at Tyr-230 and Tyr-232. UDP contacts are provided by His-249, Gly-252, and Lys-255. His-249 contacts Mn(2+). UDP-alpha-D-glucose contacts are provided by Gly-252 and Lys-255. A disordered region spans residues 331–355 (SVDRNASQKSTAEKHDIEKPTSKPQ). Residues 341–351 (TAEKHDIEKPT) are compositionally biased toward basic and acidic residues. Tyr-367 carries O-linked (Glc...) tyrosine glycosylation.

It belongs to the glycosyltransferase 8 family. Glycogenin subfamily. In terms of assembly, interacts with glycogen synthase GSY2. It depends on Mn(2+) as a cofactor.

The protein localises to the cytoplasm. It is found in the vacuole. It catalyses the reaction L-tyrosyl-[glycogenin] + UDP-alpha-D-glucose = alpha-D-glucosyl-L-tyrosyl-[glycogenin] + UDP + H(+). The catalysed reaction is [1,4-alpha-D-glucosyl](n)-L-tyrosyl-[glycogenin] + UDP-alpha-D-glucose = [1,4-alpha-D-glucosyl](n+1)-L-tyrosyl-[glycogenin] + UDP + H(+). In terms of biological role, self-glucosylating initiator of glycogen synthesis. It catalyzes the formation of a short alpha (1,4)-glucosyl chain covalently attached via a glucose 1-O-tyrosyl linkage to internal tyrosine residues and these chains act as primers for the elongation reaction catalyzed by glycogen synthase. Capable of transferring glucosyl residues to unbound acceptors such as free oligoglucans or oligoglucan derivatives. The protein is Glycogenin-2 of Saccharomyces cerevisiae (strain ATCC 204508 / S288c) (Baker's yeast).